We begin with the raw amino-acid sequence, 420 residues long: MNILNNNLYEMDKEIYEIIKNEKIRQNNVIELIASENFVSSAVLEAQGSILTNKYAEGYPSKRFYNGCDEVDKAEVLAIERIKKLFNCKYANVQPHSGSQANQTVYLALLQPCDTILGMSLDSGGHLTHGAAPNISGKWFNTVSYHVDQETYLIDYDEVERLAVLHNPKLLIAGFSAYPRKIDFAKFRKIADKVGAYLMADIAHIAGLVATGEHQSPIPYAHVVTSTTHKTLRGPRGGLILSDDEEIGKKINSALFPGLQGGPLMHIIAAKAVAFLENLQPEYKNYIKQVISNAKALAISLQERGYDILTGGTDNHIVLVDLRKDGITGKCAANSLDRAGITCNKNAIPFDTTSPFITSGIRFGTPACTTKGFKEKDFVLIGHMVAEILDGLKHNEDNSKTEQKVLSEVKKLMKLFPFYD.

Residues L121 and 125 to 127 (GHL) contribute to the (6S)-5,6,7,8-tetrahydrofolate site. At K230 the chain carries N6-(pyridoxal phosphate)lysine. Residues E246 and 354 to 356 (SPF) each bind (6S)-5,6,7,8-tetrahydrofolate.

The protein belongs to the SHMT family. As to quaternary structure, homodimer. It depends on pyridoxal 5'-phosphate as a cofactor.

The protein localises to the cytoplasm. It carries out the reaction (6R)-5,10-methylene-5,6,7,8-tetrahydrofolate + glycine + H2O = (6S)-5,6,7,8-tetrahydrofolate + L-serine. The protein operates within one-carbon metabolism; tetrahydrofolate interconversion. It functions in the pathway amino-acid biosynthesis; glycine biosynthesis; glycine from L-serine: step 1/1. In terms of biological role, catalyzes the reversible interconversion of serine and glycine with tetrahydrofolate (THF) serving as the one-carbon carrier. This reaction serves as the major source of one-carbon groups required for the biosynthesis of purines, thymidylate, methionine, and other important biomolecules. Also exhibits THF-independent aldolase activity toward beta-hydroxyamino acids, producing glycine and aldehydes, via a retro-aldol mechanism. The protein is Serine hydroxymethyltransferase of Rickettsia prowazekii (strain Madrid E).